We begin with the raw amino-acid sequence, 413 residues long: Multifunctional CCA protein (413 aa).

G8 and R11 together coordinate ATP. CTP-binding residues include G8 and R11. 2 residues coordinate Mg(2+): D21 and D23. ATP contacts are provided by R91, R137, and R140. CTP-binding residues include R91, R137, and R140. One can recognise an HD domain in the interval 228–329 (TGIHTLMVLE…VKIFDKADLW (102 aa)).

Belongs to the tRNA nucleotidyltransferase/poly(A) polymerase family. Bacterial CCA-adding enzyme type 1 subfamily. In terms of assembly, monomer. Can also form homodimers and oligomers. It depends on Mg(2+) as a cofactor. Ni(2+) serves as cofactor.

The enzyme catalyses a tRNA precursor + 2 CTP + ATP = a tRNA with a 3' CCA end + 3 diphosphate. The catalysed reaction is a tRNA with a 3' CCA end + 2 CTP + ATP = a tRNA with a 3' CCACCA end + 3 diphosphate. Functionally, catalyzes the addition and repair of the essential 3'-terminal CCA sequence in tRNAs without using a nucleic acid template. Adds these three nucleotides in the order of C, C, and A to the tRNA nucleotide-73, using CTP and ATP as substrates and producing inorganic pyrophosphate. tRNA 3'-terminal CCA addition is required both for tRNA processing and repair. Also involved in tRNA surveillance by mediating tandem CCA addition to generate a CCACCA at the 3' terminus of unstable tRNAs. While stable tRNAs receive only 3'-terminal CCA, unstable tRNAs are marked with CCACCA and rapidly degraded. The sequence is that of Multifunctional CCA protein from Shewanella sediminis (strain HAW-EB3).